The sequence spans 215 residues: FMN-dependent NADH:quinone oxidoreductase 1 (215 aa).

Belongs to the azoreductase type 1 family. In terms of assembly, homodimer. Requires FMN as cofactor.

The catalysed reaction is 2 a quinone + NADH + H(+) = 2 a 1,4-benzosemiquinone + NAD(+). The enzyme catalyses N,N-dimethyl-1,4-phenylenediamine + anthranilate + 2 NAD(+) = 2-(4-dimethylaminophenyl)diazenylbenzoate + 2 NADH + 2 H(+). In terms of biological role, quinone reductase that provides resistance to thiol-specific stress caused by electrophilic quinones. Its function is as follows. Also exhibits azoreductase activity. Catalyzes the reductive cleavage of the azo bond in aromatic azo compounds to the corresponding amines. This is FMN-dependent NADH:quinone oxidoreductase 1 from Lactiplantibacillus plantarum (strain ATCC BAA-793 / NCIMB 8826 / WCFS1) (Lactobacillus plantarum).